The chain runs to 317 residues: Egg-laying defective protein 26 (317 aa).

The region spanning E156–D277 is the LRAT domain. Active-site residues include H166 and H178. Residue C261 is the Acyl-thioester intermediate of the active site.

In terms of tissue distribution, highly expressed in the cells of the spermatheca, the mouth, and the lining of the pharynx, the rectum, and the excretory canal. Also expressed in the pharyngeal intestinal junction cell.

It is found in the apical cell membrane. In terms of biological role, putative acyltransferase. Plays a role in the morphogenesis of a vulval toroid cell, vulF, which is located where the vulva and the uterus connect. Not required for specifying vulval cell fate. The protein is Egg-laying defective protein 26 of Caenorhabditis elegans.